Consider the following 3305-residue polypeptide: Apolipophorins (3305 aa).

The N-terminal stretch at 1-23 (MGKSNRLLSVLFVISVLWKAAYG) is a signal peptide. Positions 39-640 (FAAGQKYNYG…SQTSFLPRSV (602 aa)) constitute a Vitellogenin domain. 2 N-linked (GlcNAc...) asparagine glycosylation sites follow: Asn643 and Asn2769. A VWFD domain is found at 2733 to 2899 (LRAVVVNGQH…NSYRLSRSCP (167 aa)). The cysteines at positions 2757 and 2898 are disulfide-linked.

Cleaved into 2 chains by furin protease. However, prevention of cleavage does not impair its function. In terms of processing, N-glycosylated.

The protein resides in the secreted. Constitutes the major component of lipophorin, which mediates transport for various types of lipids in hemolymph. Acts by forming lipoprotein particles that bind lipoproteins and lipids. May be required for morphogens wingless (wg) and hedgehog (hh) function, possibly by acting as vehicles for the movement of wg and hh. The sequence is that of Apolipophorins from Manduca sexta (Tobacco hawkmoth).